We begin with the raw amino-acid sequence, 296 residues long: 4-hydroxybenzoate octaprenyltransferase (296 aa).

The next 8 helical transmembrane spans lie at 28–48, 52–72, 102–122, 145–167, 174–196, 219–239, 241–261, and 275–295; these read PIGI…AGNG, LANV…GCCI, ALAL…CTNS, TYYP…FTAA, SAWL…YAMV, NIIL…GSRF, LGGW…WEYW, and FLHN…DYAF.

It belongs to the UbiA prenyltransferase family. Mg(2+) serves as cofactor.

It is found in the cell inner membrane. The catalysed reaction is all-trans-octaprenyl diphosphate + 4-hydroxybenzoate = 4-hydroxy-3-(all-trans-octaprenyl)benzoate + diphosphate. The protein operates within cofactor biosynthesis; ubiquinone biosynthesis. Its function is as follows. Catalyzes the prenylation of para-hydroxybenzoate (PHB) with an all-trans polyprenyl group. Mediates the second step in the final reaction sequence of ubiquinone-8 (UQ-8) biosynthesis, which is the condensation of the polyisoprenoid side chain with PHB, generating the first membrane-bound Q intermediate 3-octaprenyl-4-hydroxybenzoate. The sequence is that of 4-hydroxybenzoate octaprenyltransferase from Pseudomonas putida (strain GB-1).